The chain runs to 89 residues: Acylphosphatase (89 aa).

An Acylphosphatase-like domain is found at 3-89; it reads RKEFLVSGRV…DTREKRFSTY (87 aa). Catalysis depends on residues Arg-18 and Asn-36.

Belongs to the acylphosphatase family.

The catalysed reaction is an acyl phosphate + H2O = a carboxylate + phosphate + H(+). This Clostridium perfringens (strain ATCC 13124 / DSM 756 / JCM 1290 / NCIMB 6125 / NCTC 8237 / Type A) protein is Acylphosphatase (acyP).